Reading from the N-terminus, the 348-residue chain is NADH-quinone oxidoreductase subunit H (348 aa).

A run of 9 helical transmembrane segments spans residues 13–33, 50–70, 82–102, 115–135, 161–181, 198–218, 258–278, 285–305, and 321–341; these read LIMV…IAFL, PNVV…KFIL, AVFL…YAVI, VGIL…IMGG, IGLV…TDIV, FLDW…ISGL, AIVL…LPIV, WVPG…MIAL, and LGWK…AFVL.

The protein belongs to the complex I subunit 1 family. As to quaternary structure, NDH-1 is composed of 14 different subunits. Subunits NuoA, H, J, K, L, M, N constitute the membrane sector of the complex.

It is found in the cell inner membrane. The catalysed reaction is a quinone + NADH + 5 H(+)(in) = a quinol + NAD(+) + 4 H(+)(out). NDH-1 shuttles electrons from NADH, via FMN and iron-sulfur (Fe-S) centers, to quinones in the respiratory chain. The immediate electron acceptor for the enzyme in this species is believed to be ubiquinone. Couples the redox reaction to proton translocation (for every two electrons transferred, four hydrogen ions are translocated across the cytoplasmic membrane), and thus conserves the redox energy in a proton gradient. This subunit may bind ubiquinone. This Agrobacterium fabrum (strain C58 / ATCC 33970) (Agrobacterium tumefaciens (strain C58)) protein is NADH-quinone oxidoreductase subunit H.